The sequence spans 448 residues: Methylenetetrahydrofolate--tRNA-(uracil-5-)-methyltransferase TrmFO (448 aa).

G13–G18 is a binding site for FAD.

Belongs to the MnmG family. TrmFO subfamily. Requires FAD as cofactor.

It is found in the cytoplasm. The catalysed reaction is uridine(54) in tRNA + (6R)-5,10-methylene-5,6,7,8-tetrahydrofolate + NADH + H(+) = 5-methyluridine(54) in tRNA + (6S)-5,6,7,8-tetrahydrofolate + NAD(+). It carries out the reaction uridine(54) in tRNA + (6R)-5,10-methylene-5,6,7,8-tetrahydrofolate + NADPH + H(+) = 5-methyluridine(54) in tRNA + (6S)-5,6,7,8-tetrahydrofolate + NADP(+). Its function is as follows. Catalyzes the folate-dependent formation of 5-methyl-uridine at position 54 (M-5-U54) in all tRNAs. The protein is Methylenetetrahydrofolate--tRNA-(uracil-5-)-methyltransferase TrmFO of Streptococcus pyogenes serotype M1.